A 133-amino-acid chain; its full sequence is Ribonuclease VapC29 (133 aa).

A PINc domain is found at 3 to 122 (VLLDANVLIA…TLDSGLAHLH (120 aa)). Asp6 and Asp97 together coordinate Mg(2+).

The protein belongs to the PINc/VapC protein family. Requires Mg(2+) as cofactor.

Functionally, toxic component of a type II toxin-antitoxin (TA) system. Its cognate antitoxin is VapB29. Has ribonuclease activity. The chain is Ribonuclease VapC29 from Mycobacterium tuberculosis (strain CDC 1551 / Oshkosh).